The following is a 113-amino-acid chain: RING-box protein 2 (113 aa).

Positions 1–26 are disordered; sequence MADVEDGEEPCVLSSHSGSAGSKSGG. The residue at position 2 (Ala-2) is an N-acetylalanine. Zn(2+) is bound by residues Cys-50, Cys-53, Cys-61, Cys-64, Cys-73, Cys-80, His-82, His-85, Cys-87, Cys-88, Cys-99, and Cys-102. An RING-type zinc finger spans residues 61-103; sequence CLRCQAENKQEDCVVVWGECNHSFHNCCMSLWVKQNNRCPLCQ.

This sequence belongs to the RING-box family. Catalytic component of multiple cullin-5-RING E3 ubiquitin-protein ligase complexes (ECS complexes, also named CRL5 complexes) composed of CUL5, Elongin BC (ELOB and ELOC), RNF7/RBX2 and a variable SOCS box domain-containing protein as substrate-specific recognition component. Also interacts (with lower preference) with CUL1, CUL2, CUL3, CUL4A and CUL4B; additional evidence is however required to confirm this result in vivo. Interacts with UBE2F. Interacts with CSNK2B, the interaction is not affected by phosphorylation by CK2. May also interact with DCUN1D1, DCUN1D2, DCUN1D3, DCUN1D4 and DCUN1D5.

It localises to the cytoplasm. Its subcellular location is the nucleus. It catalyses the reaction S-ubiquitinyl-[E2 ubiquitin-conjugating enzyme]-L-cysteine + [acceptor protein]-L-lysine = [E2 ubiquitin-conjugating enzyme]-L-cysteine + N(6)-ubiquitinyl-[acceptor protein]-L-lysine.. The catalysed reaction is S-[NEDD8-protein]-yl-[E2 NEDD8-conjugating enzyme]-L-cysteine + [cullin]-L-lysine = [E2 NEDD8-conjugating enzyme]-L-cysteine + N(6)-[NEDD8-protein]-yl-[cullin]-L-lysine.. It participates in protein modification; protein ubiquitination. The protein operates within protein modification; protein neddylation. In terms of biological role, catalytic component of multiple cullin-5-RING E3 ubiquitin-protein ligase complexes (ECS complexes), which mediate the ubiquitination and subsequent proteasomal degradation of target proteins. It is thereby involved in various biological processes, such as cell cycle progression, signal transduction and transcription. The functional specificity of the E3 ubiquitin-protein ligase ECS complexes depend on the variable SOCS box-containing substrate recognition component. Within ECS complexes, RNF7/RBX2 recruits the E2 ubiquitination enzyme to the complex via its RING-type and brings it into close proximity to the substrate. Catalytic subunit of various SOCS-containing ECS complexes, such as the ECS(SOCS7) complex, that regulate reelin signaling by mediating ubiquitination and degradation of DAB1. The ECS(SOCS2) complex mediates the ubiquitination and subsequent proteasomal degradation of phosphorylated EPOR and GHR. Promotes ubiquitination and degradation of NF1, thereby regulating Ras protein signal transduction. As part of the ECS(ASB9) complex, catalyzes ubiquitination and degradation of CKB. The ECS(SPSB3) complex catalyzes ubiquitination of nuclear CGAS. As part of the ECS(RAB40C) complex, mediates ANKRD28 ubiquitination and degradation, thereby inhibiting protein phosphatase 6 (PP6) complex activity and focal adhesion assembly during cell migration. As part of some ECS complex, catalyzes 'Lys-11'-linked ubiquitination and degradation of BTRC. ECS complexes and ARIH2 collaborate in tandem to mediate ubiquitination of target proteins; ARIH2 mediating addition of the first ubiquitin on CRLs targets. Specifically catalyzes the neddylation of CUL5 via its interaction with UBE2F. Does not catalyze neddylation of other cullins (CUL1, CUL2, CUL3, CUL4A or CUL4B). May play a role in protecting cells from apoptosis induced by redox agents. In Mus musculus (Mouse), this protein is RING-box protein 2.